Consider the following 438-residue polypeptide: Adenylosuccinate synthetase (438 aa).

GTP-binding positions include 13–19 (GDEGKGK) and 41–43 (GHT). The Proton acceptor role is filled by Asp14. Residues Asp14 and Gly41 each coordinate Mg(2+). IMP contacts are provided by residues 14–17 (DEGK), 39–42 (NAGH), Thr136, Arg150, Gln231, Thr246, and Arg310. His42 acts as the Proton donor in catalysis. 306 to 312 (STTGRRR) contacts substrate. GTP-binding positions include Arg312, 338–340 (KID), and 421–423 (STG).

The protein belongs to the adenylosuccinate synthetase family. In terms of assembly, homodimer. The cofactor is Mg(2+).

Its subcellular location is the cytoplasm. It carries out the reaction IMP + L-aspartate + GTP = N(6)-(1,2-dicarboxyethyl)-AMP + GDP + phosphate + 2 H(+). It functions in the pathway purine metabolism; AMP biosynthesis via de novo pathway; AMP from IMP: step 1/2. In terms of biological role, plays an important role in the de novo pathway of purine nucleotide biosynthesis. Catalyzes the first committed step in the biosynthesis of AMP from IMP. In Blochmanniella floridana, this protein is Adenylosuccinate synthetase.